We begin with the raw amino-acid sequence, 147 residues long: MVHFTAEEKNAITTIWGKVNVEETGGEALGRLLVVYPWTQRFFDSFGNLSSASAILGNPKVKAHGKKVLTSFGDAVKNLDNLKGTFSKLSELHCDKLHVDPENFRLLGNVLVIVMAAHFNKEFTPEVQAAFQKLVTGVANALAHKYH.

Positions 3 to 147 (HFTAEEKNAI…VANALAHKYH (145 aa)) constitute a Globin domain. Ser-51 bears the Phosphoserine mark. The heme b site is built by His-64 and His-93.

Belongs to the globin family. Heterotetramer of two alpha chains and two epsilon chains in early embryonic hemoglobin Gower-2; two zeta chains and two epsilon chains in early embryonic hemoglobin Gower-1. As to expression, red blood cells.

In terms of biological role, the epsilon chain is a beta-type chain of early mammalian embryonic hemoglobin. The polypeptide is Hemoglobin subunit epsilon (HBE1) (Sminthopsis crassicaudata (Fat-tailed dunnart)).